We begin with the raw amino-acid sequence, 392 residues long: Alanine--glyoxylate aminotransferase (392 aa).

Position 209 is an N6-(pyridoxal phosphate)lysine (Lys-209). At Lys-225 the chain carries N6-acetyllysine; alternate. An N6-succinyllysine; alternate modification is found at Lys-225. Residues Lys-234 and Lys-312 each carry the N6-acetyllysine modification. Arg-360 serves as a coordination point for substrate. A Microbody targeting signal motif is present at residues 390 to 392 (SQL).

The protein belongs to the class-V pyridoxal-phosphate-dependent aminotransferase family. Homodimer. Pyridoxal 5'-phosphate serves as cofactor.

The protein localises to the peroxisome. It carries out the reaction L-serine + pyruvate = 3-hydroxypyruvate + L-alanine. The enzyme catalyses glyoxylate + L-alanine = glycine + pyruvate. Functionally, peroxisomal aminotransferase that catalyzes the transamination of glyoxylate to glycine and contributes to the glyoxylate detoxification. Also catalyzes the transamination between L-serine and pyruvate and contributes to gluconeogenesis from the L-serine metabolism. In Oryctolagus cuniculus (Rabbit), this protein is Alanine--glyoxylate aminotransferase.